A 376-amino-acid chain; its full sequence is PCM7-4 (376 aa).

Its function is as follows. Has antibacterial activity against Listeria monocytogenes. The chain is PCM7-4 from Bacillus velezensis.